The chain runs to 156 residues: MPRKGPVPKRDVLPDPIYNSKIFTKLVNQLMWDGKKSLAEKICYGAFAIVQSKTRREPLEVFEEAMKNITPIVEVRARRVGGANYQVPVEVRSDRRQTLAIRWLVGYARKRGEKTMAERLAGEIMDAANHTGAAVKKREDTHKMAEANKAFAHYRW.

Belongs to the universal ribosomal protein uS7 family. Part of the 30S ribosomal subunit. Contacts proteins S9 and S11.

Functionally, one of the primary rRNA binding proteins, it binds directly to 16S rRNA where it nucleates assembly of the head domain of the 30S subunit. Is located at the subunit interface close to the decoding center, probably blocks exit of the E-site tRNA. This chain is Small ribosomal subunit protein uS7, found in Syntrophomonas wolfei subsp. wolfei (strain DSM 2245B / Goettingen).